Here is a 337-residue protein sequence, read N- to C-terminus: Eukaryotic translation initiation factor 3 subunit H (337 aa).

The MPN domain maps to 21-153 (VQCDGLAVMK…LKAYRLTPQA (133 aa)).

It belongs to the eIF-3 subunit H family. Component of the eukaryotic translation initiation factor 3 (eIF-3) complex. The eIF-3 complex interacts with pix. Interacts with mxt.

The protein localises to the cytoplasm. Functionally, component of the eukaryotic translation initiation factor 3 (eIF-3) complex, which is involved in protein synthesis of a specialized repertoire of mRNAs and, together with other initiation factors, stimulates binding of mRNA and methionyl-tRNAi to the 40S ribosome. The eIF-3 complex specifically targets and initiates translation of a subset of mRNAs involved in cell proliferation. The sequence is that of Eukaryotic translation initiation factor 3 subunit H from Drosophila pseudoobscura pseudoobscura (Fruit fly).